Consider the following 345-residue polypeptide: Methylthioribose-1-phosphate isomerase (345 aa).

Residues 44 to 46 (RGA), arginine 87, and glutamine 194 contribute to the substrate site. Aspartate 235 (proton donor) is an active-site residue. 245–246 (NK) is a binding site for substrate.

This sequence belongs to the eIF-2B alpha/beta/delta subunits family. MtnA subfamily.

It carries out the reaction 5-(methylsulfanyl)-alpha-D-ribose 1-phosphate = 5-(methylsulfanyl)-D-ribulose 1-phosphate. It participates in amino-acid biosynthesis; L-methionine biosynthesis via salvage pathway; L-methionine from S-methyl-5-thio-alpha-D-ribose 1-phosphate: step 1/6. Catalyzes the interconversion of methylthioribose-1-phosphate (MTR-1-P) into methylthioribulose-1-phosphate (MTRu-1-P). This Heliobacterium modesticaldum (strain ATCC 51547 / Ice1) protein is Methylthioribose-1-phosphate isomerase.